The following is a 202-amino-acid chain: dITP/XTP pyrophosphatase (202 aa).

A substrate-binding site is contributed by 10-15; the sequence is TGNAGK. Mg(2+) is bound by residues Asp46 and Asp75. Asp75 functions as the Proton acceptor in the catalytic mechanism. Residues Ser76, 160–163, Lys183, and 188–189 each bind substrate; these read FGYD and HR.

It belongs to the HAM1 NTPase family. In terms of assembly, homodimer. Requires Mg(2+) as cofactor.

It carries out the reaction XTP + H2O = XMP + diphosphate + H(+). It catalyses the reaction dITP + H2O = dIMP + diphosphate + H(+). The enzyme catalyses ITP + H2O = IMP + diphosphate + H(+). Its function is as follows. Pyrophosphatase that catalyzes the hydrolysis of nucleoside triphosphates to their monophosphate derivatives, with a high preference for the non-canonical purine nucleotides XTP (xanthosine triphosphate), dITP (deoxyinosine triphosphate) and ITP. Seems to function as a house-cleaning enzyme that removes non-canonical purine nucleotides from the nucleotide pool, thus preventing their incorporation into DNA/RNA and avoiding chromosomal lesions. This chain is dITP/XTP pyrophosphatase, found in Idiomarina loihiensis (strain ATCC BAA-735 / DSM 15497 / L2-TR).